Reading from the N-terminus, the 20-residue chain is Putative 60 kDa spermidine-binding protein (20 aa).

Residues 1–20 are disordered; that stretch reads SXAAVVEPPETSQNRIAKGE. The segment covering 10-20 has biased composition (polar residues); sequence ETSQNRIAKGE.

Dimer of 18 kDa and 60 kDa subunit.

It is found in the microsome membrane. It localises to the endoplasmic reticulum membrane. In terms of biological role, may have spermidine-binding activity. The sequence is that of Putative 60 kDa spermidine-binding protein from Zea mays (Maize).